A 664-amino-acid chain; its full sequence is Sorbicillinoid biosynthetic cluster transcription factor sor3 (664 aa).

The zn(2)-C6 fungal-type DNA-binding region spans Cys40 to Cys67. A disordered region spans residues Ser68–Glu102.

Its subcellular location is the nucleus. In terms of biological role, transcription factor that acts in concert with sor4 which is a transcriptional activator of the gene cluster that mediates the biosynthesis of sorbicillinoids, a diverse group of yellow secondary metabolites that restrict growth of competing pathogenic fungi but not of bacteria. Regulates the cluster genes in a light dependent manner. Also plays a direct or indirect role in regulation of paracelsin biosynthesis and cellulase gene expression. This Hypocrea jecorina (strain QM6a) (Trichoderma reesei) protein is Sorbicillinoid biosynthetic cluster transcription factor sor3.